Reading from the N-terminus, the 371-residue chain is Cytochrome b (371 aa).

A run of 4 helical transmembrane segments spans residues 25–45, 69–90, 105–125, and 170–190; these read FGSM…FLAV, WMMQ…YIHI, WMSG…GYVL, and FFAL…LHII. His-75 and His-89 together coordinate heme b. Positions 174 and 188 each coordinate heme b. An a ubiquinone-binding site is contributed by His-193. The next 4 helical transmembrane spans lie at 218–238, 280–300, 312–332, and 339–358; these read HKDL…SSFF, LGGA…PFTH, LSQL…WAAT, and FIVI…LSTP.

It belongs to the cytochrome b family. As to quaternary structure, the cytochrome bc1 complex contains 3 respiratory subunits (MT-CYB, CYC1 and UQCRFS1), 2 core proteins (UQCRC1 and UQCRC2) and probably 6 low-molecular weight proteins. Requires heme b as cofactor.

The protein resides in the mitochondrion inner membrane. In terms of biological role, component of the ubiquinol-cytochrome c reductase complex (complex III or cytochrome b-c1 complex) that is part of the mitochondrial respiratory chain. The b-c1 complex mediates electron transfer from ubiquinol to cytochrome c. Contributes to the generation of a proton gradient across the mitochondrial membrane that is then used for ATP synthesis. The sequence is that of Cytochrome b (MT-CYB) from Aspidites melanocephalus (Black-headed python).